The primary structure comprises 60 residues: Large ribosomal subunit protein bL33 (60 aa).

Belongs to the bacterial ribosomal protein bL33 family.

In Chlorobium chlorochromatii (strain CaD3), this protein is Large ribosomal subunit protein bL33.